A 341-amino-acid chain; its full sequence is Phosphate acyltransferase (341 aa).

Belongs to the PlsX family. In terms of assembly, homodimer. Probably interacts with PlsY.

It localises to the cytoplasm. The enzyme catalyses a fatty acyl-[ACP] + phosphate = an acyl phosphate + holo-[ACP]. It participates in lipid metabolism; phospholipid metabolism. In terms of biological role, catalyzes the reversible formation of acyl-phosphate (acyl-PO(4)) from acyl-[acyl-carrier-protein] (acyl-ACP). This enzyme utilizes acyl-ACP as fatty acyl donor, but not acyl-CoA. In Aliivibrio fischeri (strain ATCC 700601 / ES114) (Vibrio fischeri), this protein is Phosphate acyltransferase.